The following is a 71-amino-acid chain: Pro-MCH (71 aa).

Residues 1-20 (AKMNLSSYILILTFSLFSQG) form the signal peptide.

Belongs to the melanin-concentrating hormone family.

Its subcellular location is the secreted. The sequence is that of Pro-MCH (PMCH) from Pan paniscus (Pygmy chimpanzee).